The primary structure comprises 214 residues: Large ribosomal subunit protein uL29m (214 aa).

The protein belongs to the universal ribosomal protein uL29 family. In terms of assembly, component of the mitochondrial large ribosomal subunit. Mature mitochondrial ribosomes consist of a small (37S) and a large (54S) subunit. The 37S subunit contains at least 33 different proteins and 1 molecule of RNA (15S). The 54S subunit contains at least 45 different proteins and 1 molecule of RNA (21S).

The protein resides in the mitochondrion. The protein is Large ribosomal subunit protein uL29m (mrpl4) of Aspergillus terreus (strain NIH 2624 / FGSC A1156).